A 234-amino-acid polypeptide reads, in one-letter code: Peptidyl-tRNA hydrolase (234 aa).

Tyr-14 lines the tRNA pocket. His-19 (proton acceptor) is an active-site residue. TRNA contacts are provided by Phe-64, Asn-66, and Asn-112. The tract at residues 187–234 (TGTKADEEKPKPAKSHIHQARNGVQPKKLPETGPMAEMLKKMFGPKKD) is disordered.

It belongs to the PTH family. In terms of assembly, monomer.

The protein resides in the cytoplasm. The enzyme catalyses an N-acyl-L-alpha-aminoacyl-tRNA + H2O = an N-acyl-L-amino acid + a tRNA + H(+). In terms of biological role, hydrolyzes ribosome-free peptidyl-tRNAs (with 1 or more amino acids incorporated), which drop off the ribosome during protein synthesis, or as a result of ribosome stalling. Catalyzes the release of premature peptidyl moieties from peptidyl-tRNA molecules trapped in stalled 50S ribosomal subunits, and thus maintains levels of free tRNAs and 50S ribosomes. The sequence is that of Peptidyl-tRNA hydrolase from Allorhizobium ampelinum (strain ATCC BAA-846 / DSM 112012 / S4) (Agrobacterium vitis (strain S4)).